The primary structure comprises 231 residues: MLRLEDLDIRKGSFCLSGTASIGAADSVAVIGPSGAGKSTLLEAIAGFQPLHAGQVLWRGEDLTAHRPGQRPVAMLFQDGNLFPHLTVRQNAGLGIDPNRKLRPKERQTVEEAIARVGLGGLEERKPAELSGGQQSRAALARVLVQRRDILLLDEPFAALGPALKAEMLDLVKEITSENGVTLLMVSHDPDDARRIADQVILIAEGQLYPPAPTHALLDNPPPALRGYLGA.

The region spanning 2 to 230 is the ABC transporter domain; the sequence is LRLEDLDIRK…PPPALRGYLG (229 aa). 32–39 lines the ATP pocket; it reads GPSGAGKS.

It belongs to the ABC transporter superfamily. Thiamine importer (TC 3.A.1.19.1) family. The complex is composed of two ATP-binding proteins (ThiQ), two transmembrane proteins (ThiP) and a solute-binding protein (ThiB).

Its subcellular location is the cell inner membrane. The catalysed reaction is thiamine(out) + ATP + H2O = thiamine(in) + ADP + phosphate + H(+). In terms of biological role, part of the ABC transporter complex ThiBPQ involved in thiamine import. Responsible for energy coupling to the transport system. The sequence is that of Thiamine import ATP-binding protein ThiQ from Ruegeria sp. (strain TM1040) (Silicibacter sp.).